Consider the following 223-residue polypeptide: MASKLLRAVILGPPGSGKGTVCQRIAQNFGLQHLSSGHFLRENIKANTEVGDMAKQYIEKGLLVPDHVITRLMLLELENRRGEHWLLDGFPRTLVQAEALDRLCDLDLVITLNIPFETLKDRLSRRWIHPPSGRVYNLDFNPPHVHGMDDVTGEPLVQQEDDKPEAVAARLRQYKDVAKPVIELYKSRGVLHQFSGTETNKIWPYVYTLFSNKITPVQSKEAY.

Gly15–Thr20 is a binding site for a ribonucleoside 5'-triphosphate. Positions Ser35–Val64 are NMP. Residues Ser36 and Arg41 each coordinate AMP. Position 60 is an N6-succinyllysine (Lys60). AMP contacts are provided by residues Leu62–Val64, Gly89–Arg92, and Gln96. The LID stretch occupies residues Arg125–Asp162. Residues Arg126 and Val135–Tyr136 each bind a ribonucleoside 5'-triphosphate. Arg170 contributes to the AMP binding site. Residue Lys175 is modified to N6-acetyllysine. An N6-acetyllysine; alternate mark is found at Lys179 and Lys186. Lys179 and Lys186 each carry N6-succinyllysine; alternate. Thr199 serves as a coordination point for a ribonucleoside 5'-triphosphate.

This sequence belongs to the adenylate kinase family. AK3 subfamily. As to quaternary structure, monomer. Interacts with SLC25A5/ANT2.

It is found in the mitochondrion matrix. It carries out the reaction a ribonucleoside 5'-phosphate + ATP = a ribonucleoside 5'-diphosphate + ADP. It catalyses the reaction AMP + ATP = 2 ADP. The catalysed reaction is GTP + AMP = GDP + ADP. The enzyme catalyses CMP + ATP = CDP + ADP. It carries out the reaction GTP + CMP = CDP + GDP. It catalyses the reaction dAMP + ATP = dADP + ADP. The catalysed reaction is dCMP + ATP = dCDP + ADP. The enzyme catalyses a 2'-deoxyribonucleoside 5'-diphosphate + ATP = a 2'-deoxyribonucleoside 5'-triphosphate + ADP. It carries out the reaction a ribonucleoside 5'-diphosphate + ATP = a ribonucleoside 5'-triphosphate + ADP. It catalyses the reaction GDP + ATP = GTP + ADP. The catalysed reaction is CDP + GTP = CTP + GDP. The enzyme catalyses CDP + ATP = CTP + ADP. It carries out the reaction UDP + ATP = UTP + ADP. It catalyses the reaction GTP + UDP = UTP + GDP. The catalysed reaction is dADP + GTP = dATP + GDP. The enzyme catalyses dCDP + GTP = dCTP + GDP. It carries out the reaction dCDP + ATP = dCTP + ADP. It catalyses the reaction dGDP + ATP = dGTP + ADP. The catalysed reaction is dTDP + GTP = dTTP + GDP. The enzyme catalyses dTDP + ATP = dTTP + ADP. Broad-specificity mitochondrial nucleoside phosphate kinase involved in cellular nucleotide homeostasis by catalyzing nucleoside-phosphate interconversions. Similar to other adenylate kinases, preferentially catalyzes the phosphorylation of the nucleoside monophosphate AMP with ATP as phosphate donor to produce ADP. Phosphorylates only AMP when using GTP as phosphate donor. In vitro, can also catalyze the phosphorylation of CMP, dAMP and dCMP and use GTP as an alternate phosphate donor. Moreover, exhibits a diphosphate kinase activity, producing ATP, CTP, GTP, UTP, TTP, dATP, dCTP and dGTP from the corresponding diphosphate substrates with either ATP or GTP as phosphate donors. Plays a role in controlling cellular ATP levels by regulating phosphorylation and activation of the energy sensor protein kinase AMPK. Plays a protective role in the cellular response to oxidative stress. The chain is Adenylate kinase 4, mitochondrial from Bos taurus (Bovine).